A 303-amino-acid chain; its full sequence is UPF0282 protein MM_2966 (303 aa).

Belongs to the UPF0282 family.

The polypeptide is UPF0282 protein MM_2966 (Methanosarcina mazei (strain ATCC BAA-159 / DSM 3647 / Goe1 / Go1 / JCM 11833 / OCM 88) (Methanosarcina frisia)).